A 286-amino-acid polypeptide reads, in one-letter code: Type II restriction enzyme NgoMIV (286 aa).

Mg(2+) is bound by residues D140 and C186.

As to quaternary structure, homotetramer. Mg(2+) serves as cofactor.

It carries out the reaction Endonucleolytic cleavage of DNA to give specific double-stranded fragments with terminal 5'-phosphates.. Functionally, a P subtype restriction enzyme that recognizes the double-stranded sequence 5'-GCCGGC-3' and cleaves after G-1. This Neisseria gonorrhoeae protein is Type II restriction enzyme NgoMIV (ngoMIVR).